The following is a 122-amino-acid chain: Large ribosomal subunit protein uL14 (122 aa).

This sequence belongs to the universal ribosomal protein uL14 family. In terms of assembly, part of the 50S ribosomal subunit. Forms a cluster with proteins L3 and L19. In the 70S ribosome, L14 and L19 interact and together make contacts with the 16S rRNA in bridges B5 and B8.

Binds to 23S rRNA. Forms part of two intersubunit bridges in the 70S ribosome. The polypeptide is Large ribosomal subunit protein uL14 (Acetivibrio thermocellus (strain ATCC 27405 / DSM 1237 / JCM 9322 / NBRC 103400 / NCIMB 10682 / NRRL B-4536 / VPI 7372) (Clostridium thermocellum)).